The chain runs to 743 residues: Cytosolic neutral trehalase (743 aa).

Positions 95, 97, 99, 101, and 106 each coordinate Ca(2+). Residues Arg285, 292–293 (WD), Asn329, 338–340 (RSQ), Glu405, Arg454, and Gly457 contribute to the substrate site. Catalysis depends on proton donor/acceptor residues Asp459 and Glu664.

The protein belongs to the glycosyl hydrolase 37 family. Ca(2+) serves as cofactor.

The protein resides in the cytoplasm. It carries out the reaction alpha,alpha-trehalose + H2O = alpha-D-glucose + beta-D-glucose. The protein operates within carbohydrate degradation. Its function is as follows. Hydrolyzes intracellular trehalose to glucose. The sequence is that of Cytosolic neutral trehalase from Beauveria bassiana (strain ARSEF 2860) (White muscardine disease fungus).